Reading from the N-terminus, the 687-residue chain is Adhesion G-protein coupled receptor G1 (687 aa).

A signal peptide spans 1–25 (MTAQSLLQTTLFLLSLLFLVQGAHG). A heparin-binding site is contributed by 26–33 (RGHREDFR). The Extracellular segment spans residues 26-402 (RGHREDFRFC…VEVDAVHKHY (377 aa)). 2 cysteine pairs are disulfide-bonded: Cys35/Cys91 and Cys121/Cys177. 4 N-linked (GlcNAc...) asparagine glycosylation sites follow: Asn39, Asn148, Asn156, and Asn171. 190 to 200 (LKHPQKASRRP) provides a ligand contact to heparin. The GAIN-B domain occupies 224 to 395 (DTVSFEEDRV…AVLMVSSVEV (172 aa)). 4 N-linked (GlcNAc...) asparagine glycosylation sites follow: Asn234, Asn303, Asn324, and Asn341. Intrachain disulfides connect Cys346–Cys377 and Cys366–Cys379. The tract at residues 346 to 395 (CVFWVEDPTLSNPGRWSSAGCETVRRETQTSCFCNHLTYFAVLMVSSVEV) is GPS. The stachel stretch occupies residues 384-397 (YFAVLMVSSVEVDA). A helical membrane pass occupies residues 403 to 423 (LSLLSYVGCVVSALACVVTIA). At 424 to 442 (AYLCSRRKPRDYTIKVHMN) the chain is on the cytoplasmic side. Residues 443-463 (LLLAVFLLDVSFLLSEPVALT) form a helical membrane-spanning segment. Residues 464–470 (GSQSGCR) are Extracellular-facing. The helical transmembrane segment at 471–491 (ASAIFLHFSLLACLSWMGLEG) threads the bilayer. Over 492 to 512 (YNLYRLVVEVFGTYIPGYLLK) the chain is Cytoplasmic. A helical membrane pass occupies residues 513-533 (LSAMGWGFPIFLVTLVALVDV). The Extracellular segment spans residues 534–570 (DNYGPIILAVHRTPESVIYPSMCWIRDSLVSYITNLG). Residues 571–591 (LFSLVFLFNMAMLGTMVVQIL) traverse the membrane as a helical segment. The Cytoplasmic portion of the chain corresponds to 592 to 603 (RLRPHTQKWSHV). Residues 604–624 (LTLLGLSLVLGLPWALIFFSF) form a helical membrane-spanning segment. The Extracellular portion of the chain corresponds to 625–630 (ASGTFQ). The helical transmembrane segment at 631–651 (LVVLYLFSIITSFQGFLIFLW) threads the bilayer. Topologically, residues 652 to 687 (YWSMRLQARGGPSPLKSNSDSARLPISTGSTSSSRI) are cytoplasmic. The tract at residues 664–687 (SPLKSNSDSARLPISTGSTSSSRI) is disordered. A compositionally biased stretch (polar residues) spans 666–687 (LKSNSDSARLPISTGSTSSSRI).

This sequence belongs to the G-protein coupled receptor 2 family. LN-TM7 subfamily. As to quaternary structure, heterodimer of 2 chains generated by proteolytic processing; the large extracellular N-terminal fragment (ADGRG1 NT) and the membrane-bound C-terminal fragment (ADGRG1-CT) predominantly remain associated and non-covalently linked. ADGRG1 NT self-associates in a trans-trans manner; the homophilic interaction enhances receptor signaling. Interacts with TGM2. Interacts with heparin; leading to the reduction of ADGRG1 shedding. Interacts with COL3A1. Part of a GPCR-tetraspanin complex at least consisting of ADGRG1, CD81, eventually CD9, and GNA11 in which CD81 is enhancing the association of ADGRG1 with GNA11. Post-translationally, autoproteolytically cleaved into 2 fragments; the large extracellular N-terminal fragment (ADGRG1 NT) and the membrane-bound C-terminal fragment (ADGRG1 CT) predominantly remain associated and non-covalently linked. Shedding to yield the secreted ADGRG1 N-terminal fragment seems to involve metalloprotease(s). In terms of processing, ubiquitinated. Undergoes polyubiquitination upon activation.

It localises to the cell membrane. It is found in the secreted. Its subcellular location is the membrane raft. Its activity is regulated as follows. Forms a heterodimer of 2 chains generated by proteolytic processing that remain associated through non-covalent interactions mediated by the GAIN-B domain. In the inactivated receptor, the Stachel sequence (also named stalk) is embedded in the GAIN-B domain, where it adopts a beta-strand conformation. On activation, the Stachel moves into the 7 transmembrane region and adopts a twisted hook-shaped configuration that forms contacts within the receptor, leading to coupling of a G-alpha protein, which activates signaling. The cleaved GAIN-B and N-terminal domains can then dissociate from the rest of the receptor. In terms of biological role, adhesion G-protein coupled receptor (aGPCR) for steroid hormone 17alpha-hydroxypregnenolone (17-OH), which is involved in cell adhesion and cell-cell interactions. Ligand binding causes a conformation change that triggers signaling via guanine nucleotide-binding proteins (G proteins) and modulates the activity of downstream effectors, such as RhoA pathway. ADGRG1 is coupled to G(12) and/or G(13) G proteins (GNA12 and GNA13, respectively) and mediates the activation Rho small GTPases. Acts as a potent suppressor of ferroptosis: binding to 17-OH-binding initiates signaling that down-regulates CD36 and alleviates ferroptosis-induced liver injury. Ligand-binding also induces cell adhesion activity via association with proteins such as collagen III/COL3A1 and TGM2. Mediates cell matrix adhesion in developing neurons and hematopoietic stem cells. Involved in cortical development, specifically in maintenance of the pial basement membrane integrity and in cortical lamination: association with COL3A1 in the developing brain inhibits neuronal migration via activation of the RhoA pathway. Together with TGM2, acts as a regulator of myelination and myelin repair in oligodendrocyte precursor cells. Acts as a hemostatic sensor of shear force: G protein-coupled receptor signaling is activated in response to shear force in platelets, promoting G(13) G protein signaling, and platelet shape change and aggregation in a COL3A1-dependent manner. Acts as an inhibitor of VEGFA production thereby inhibiting angiogenesis through a signaling pathway mediated by PRKCA. Plays a role in the maintenance of hematopoietic stem cells in bone marrow niche. Plays an essential role in testis development. The protein is Adhesion G-protein coupled receptor G1 (ADGRG1) of Macaca mulatta (Rhesus macaque).